Here is a 407-residue protein sequence, read N- to C-terminus: Probable cysteine protease atg4 (407 aa).

The active-site Nucleophile is cysteine 136. Active-site residues include aspartate 310 and histidine 312.

Belongs to the peptidase C54 family.

The protein localises to the cytoplasm. The protein resides in the nucleus. It localises to the preautophagosomal structure. The enzyme catalyses [protein]-C-terminal L-amino acid-glycyl-phosphatidylethanolamide + H2O = [protein]-C-terminal L-amino acid-glycine + a 1,2-diacyl-sn-glycero-3-phosphoethanolamine. Functionally, cysteine protease that is required for autophagy. Plays a key role in cytoplasm to vacuole transport (Cvt) and autophagy by mediating both proteolytic activation and delipidation of atg8. The protease activity is required for proteolytic activation of atg8 by the cleavage of the C-terminal amino acid of atg8 to reveal a C-terminal glycine. Azg8 ubiquitin-like activity requires the exposure of the glycine at the C-terminus for its conjugation to phosphatidylethanolamine (PE) and its insertion to membranes, which is necessary for autophagy. The atg8-PE conjugate mediates tethering between adjacent membranes and stimulates membrane hemifusion, leading to expansion of the autophagosomal membrane during autophagy. In addition to the protease activity, also catalyzes deconjugation of PE-conjugated forms of atg8 during macroautophagy since atg8 delipidation is required to release the protein from membranes, which facilitates multiple events during macroautophagy, and especially for efficient autophagosome biogenesis, the assembly of atg99-containing tubulovesicular clusters into phagophores/autophagosomes, and for the disassembly of PAS-associated ATG components. Atg8 delipidation by atg4 also recycles atg8-PE generated on inappropriate membranes to maintain a reservoir of unlipidated atg8 that is required for autophagosome formation at the PAS. The polypeptide is Probable cysteine protease atg4 (Aspergillus oryzae (strain ATCC 42149 / RIB 40) (Yellow koji mold)).